Here is a 438-residue protein sequence, read N- to C-terminus: Enolase (438 aa).

Q163 is a (2R)-2-phosphoglycerate binding site. E205 functions as the Proton donor in the catalytic mechanism. Mg(2+)-binding residues include D243, E292, and D319. (2R)-2-phosphoglycerate is bound by residues K344, R373, S374, and K395. Catalysis depends on K344, which acts as the Proton acceptor.

Belongs to the enolase family. Mg(2+) is required as a cofactor.

It is found in the cytoplasm. Its subcellular location is the secreted. The protein localises to the cell surface. It carries out the reaction (2R)-2-phosphoglycerate = phosphoenolpyruvate + H2O. Its pathway is carbohydrate degradation; glycolysis; pyruvate from D-glyceraldehyde 3-phosphate: step 4/5. Functionally, catalyzes the reversible conversion of 2-phosphoglycerate (2-PG) into phosphoenolpyruvate (PEP). It is essential for the degradation of carbohydrates via glycolysis. The protein is Enolase of Streptococcus agalactiae.